A 115-amino-acid polypeptide reads, in one-letter code: NADH-ubiquinone oxidoreductase chain 3 (115 aa).

The next 3 membrane-spanning stretches (helical) occupy residues 4-24, 55-75, and 87-107; these read LLAM…AFWL, FFLV…LLPI, and MMLT…YEWI.

The protein belongs to the complex I subunit 3 family. In terms of assembly, core subunit of respiratory chain NADH dehydrogenase (Complex I) which is composed of 45 different subunits. Interacts with TMEM186. Interacts with TMEM242.

It is found in the mitochondrion inner membrane. It catalyses the reaction a ubiquinone + NADH + 5 H(+)(in) = a ubiquinol + NAD(+) + 4 H(+)(out). Its function is as follows. Core subunit of the mitochondrial membrane respiratory chain NADH dehydrogenase (Complex I) which catalyzes electron transfer from NADH through the respiratory chain, using ubiquinone as an electron acceptor. Essential for the catalytic activity of complex I. The polypeptide is NADH-ubiquinone oxidoreductase chain 3 (Neotoma floridana (Eastern woodrat)).